A 268-amino-acid polypeptide reads, in one-letter code: Undecaprenyl-diphosphatase (268 aa).

Transmembrane regions (helical) follow at residues 1–21 (MSLIYLVVLALVQGITEFLPI), 39–59 (QGPLIDVMAHAGSLLAVLVYF), 85–105 (ALLVAASMPPIIIVAGALVAF), 110–130 (ALRSPRVIAIATLAFALPLWL), 144–164 (MSFKHAALIGIAQLFALIPGA), 187–207 (FSMLMAIPVIAAFGLVSLIEL), 221–241 (DGLIVAGLSFVTAWAAIAVLM), and 247–267 (IGFLPFALYRVGLGLALLVFF).

It belongs to the UppP family.

The protein resides in the cell inner membrane. It catalyses the reaction di-trans,octa-cis-undecaprenyl diphosphate + H2O = di-trans,octa-cis-undecaprenyl phosphate + phosphate + H(+). In terms of biological role, catalyzes the dephosphorylation of undecaprenyl diphosphate (UPP). Confers resistance to bacitracin. The sequence is that of Undecaprenyl-diphosphatase from Maricaulis maris (strain MCS10) (Caulobacter maris).